A 370-amino-acid chain; its full sequence is Cell division protein DivIB (370 aa).

The interval 1-65 (MKKKKDEELT…SNKKGTKRIV (65 aa)) is disordered. Topologically, residues 1–74 (MKKKKDEELT…VKEQRLSRQK (74 aa)) are cytoplasmic. Basic residues-rich tracts occupy residues 25 to 34 (SRFKRKRKAT) and 47 to 63 (RNNR…GTKR). Residues 75-95 (LGILIGSTLIVIALFFGYFYS) traverse the membrane as a helical segment. Topologically, residues 96-370 (SISRVQKFSV…STVNTQQDID (275 aa)) are extracellular. A POTRA domain is found at 98–169 (SRVQKFSVSG…GKVKIKVKEN (72 aa)). The segment at 295–370 (SGWTDEAKAA…STVNTQQDID (76 aa)) is disordered. Composition is skewed to low complexity over residues 304–314 (ASESSKSAESS) and 327–342 (SESA…STET). Over residues 356 to 370 (SSNAESTVNTQQDID) the composition is skewed to polar residues.

The protein belongs to the FtsQ/DivIB family. DivIB subfamily.

It is found in the cell membrane. Cell division protein that may be involved in stabilizing or promoting the assembly of the division complex. This Pediococcus pentosaceus (strain ATCC 25745 / CCUG 21536 / LMG 10740 / 183-1w) protein is Cell division protein DivIB.